A 221-amino-acid polypeptide reads, in one-letter code: Urease accessory protein UreG (221 aa).

19–26 provides a ligand contact to GTP; it reads GPVGSGKT.

This sequence belongs to the SIMIBI class G3E GTPase family. UreG subfamily. Homodimer. UreD, UreF and UreG form a complex that acts as a GTP-hydrolysis-dependent molecular chaperone, activating the urease apoprotein by helping to assemble the nickel containing metallocenter of UreC. The UreE protein probably delivers the nickel.

The protein localises to the cytoplasm. Functionally, facilitates the functional incorporation of the urease nickel metallocenter. This process requires GTP hydrolysis, probably effectuated by UreG. This chain is Urease accessory protein UreG, found in Yersinia enterocolitica serotype O:8 / biotype 1B (strain NCTC 13174 / 8081).